A 233-amino-acid polypeptide reads, in one-letter code: Synaptogyrin-1 (233 aa).

Position 1 is an N-acetylmethionine (Met-1). Topologically, residues 1 to 23 are cytoplasmic; that stretch reads MEGGAYGAGKAGGAFDPYTLVRQ. The region spanning 20–173 is the MARVEL domain; the sequence is LVRQPHTILR…QAVLAFQRYQ (154 aa). Residues 24 to 44 form a helical membrane-spanning segment; it reads PHTILRVVSWLFSIVVFGSIV. Topologically, residues 45-71 are lumenal; that stretch reads NEGYLNSASEGEEFCIYNRNPNACSYG. The chain crosses the membrane as a helical span at residues 72–92; it reads VAVGVLAFLTCLLYLALDVYF. The Cytoplasmic segment spans residues 93–103; that stretch reads PQISSVKDRKK. A helical transmembrane segment spans residues 104–124; the sequence is AVLSDIGVSAFWAFLWFVGFC. Topologically, residues 125–148 are lumenal; it reads YLANQWQVSKPKDNPLNEGTDAAR. A helical transmembrane segment spans residues 149–169; it reads AAIAFSFFSIFTWAGQAVLAF. The Cytoplasmic portion of the chain corresponds to 170 to 233; it reads QRYQIGADSA…EPQGYQSQGY (64 aa). A disordered region spans residues 194-233; sequence MPYAPYVEPTGPDPAGMGGTYQQPANTFDTEPQGYQSQGY. Positions 213–233 are enriched in polar residues; the sequence is TYQQPANTFDTEPQGYQSQGY.

It belongs to the synaptogyrin family.

The protein resides in the cytoplasmic vesicle. It localises to the secretory vesicle. The protein localises to the synaptic vesicle membrane. It is found in the melanosome. Functionally, may play a role in regulated exocytosis. Modulates the localization of synaptophysin/SYP into synaptic-like microvesicles and may therefore play a role in synaptic-like microvesicle formation and/or maturation. Involved in the regulation of short-term and long-term synaptic plasticity. In Homo sapiens (Human), this protein is Synaptogyrin-1.